The chain runs to 194 residues: Putative manganese efflux pump MntP (194 aa).

Transmembrane regions (helical) follow at residues 3 to 23 (PITT…AAIG), 37 to 57 (LYVA…GWLL), 65 to 85 (IATF…IHMI), 112 to 132 (LAAT…SMAF), 137 to 157 (IGIV…FGVM), and 170 to 190 (AEIV…YEHL).

It belongs to the MntP (TC 9.B.29) family.

The protein localises to the cell inner membrane. In terms of biological role, probably functions as a manganese efflux pump. This Xylella fastidiosa (strain M23) protein is Putative manganese efflux pump MntP.